Consider the following 505-residue polypeptide: Probable ribonuclease FAU-1 (505 aa).

Residues 389–408 (ISGHGSGTYDELGTPRESGD) are disordered.

The protein belongs to the FAU-1 family.

Its function is as follows. Probable RNase involved in rRNA stability through maturation and/or degradation of precursor rRNAs. Binds to RNA in loop regions with AU-rich sequences. The protein is Probable ribonuclease FAU-1 of Haloquadratum walsbyi (strain DSM 16790 / HBSQ001).